Reading from the N-terminus, the 232-residue chain is Thiamine import ATP-binding protein ThiQ (232 aa).

The region spanning 2 to 230 is the ABC transporter domain; it reads LKLTDITWLY…KGSASAIWGI (229 aa). 32–39 is an ATP binding site; it reads GPSGAGKS.

Belongs to the ABC transporter superfamily. Thiamine importer (TC 3.A.1.19.1) family. In terms of assembly, the complex is composed of two ATP-binding proteins (ThiQ), two transmembrane proteins (ThiP) and a solute-binding protein (ThiB).

It localises to the cell inner membrane. It carries out the reaction thiamine(out) + ATP + H2O = thiamine(in) + ADP + phosphate + H(+). Functionally, part of the ABC transporter complex ThiBPQ involved in thiamine import. Responsible for energy coupling to the transport system. The sequence is that of Thiamine import ATP-binding protein ThiQ from Shigella flexneri.